Reading from the N-terminus, the 574-residue chain is Meiotically up-regulated gene 72 protein (574 aa).

Residues 339–374 form a disordered region; it reads VRAGTPQSSPNFNPAMRRSPVGAASRSPSRSTIGIS. Thr-343 bears the Phosphothreonine mark. The span at 364–374 shows a compositional bias: polar residues; the sequence is RSPSRSTIGIS. Ser-392 carries the phosphoserine modification. 2 disordered regions span residues 422–451 and 495–574; these read TSPSGLNPTGRPSRFGGRVRGNPLTMNKAG and RNRR…RRMD. Over residues 541–554 the composition is skewed to polar residues; the sequence is LYDTSRYPTRNSKP.

It localises to the cytoplasm. Has a role in meiosis. The chain is Meiotically up-regulated gene 72 protein (mug72) from Schizosaccharomyces pombe (strain 972 / ATCC 24843) (Fission yeast).